The sequence spans 676 residues: MEKNLPDIFFFPNCVNVFSYKYSQDEFSNMSNMERDSFSLAVFPVIKHRWHNAHVVKHKGIYKVSTEAHGKKVSPPSLGKPSHINLTAKQYIYSEHTISFECYSFLKCITNAEINSFDEYILRGLLEAGNSLQIFSNSVGKRTDTIGVLGNKYPFSKIPLASLTPKAQREIFSAWISHRPVVLTGGTGVGKTSQVPKLLLWFNYLFGGFSTLDKITDFHERPVILSLPRIALVRLHSNTILKSLGFKVLDGSPISLRYGSIPEELINKQPKKYGIVFSTHKLSLTKLFSYGTLIIDEVHEHDQIGDIIIAVARKHHTKIDSMFLMTATLEDDRERLKVFLPNPAFIHIPGDTLFKISEVFIHNKINPSSRMAYIEEEKRNLVTAIQMYTPPDGSSGIVFVASVAQCHEYKSYLEKRLPYDMYIIHGKVLEIDKILEKVYSSPNVSIIISTPYLESSVTIHNVTHIYDMGRVFVPAPFGGSQQFISKSMRDQRKGRVGRVNPGTYVYFYDLSYMKSIQRINSEFLHNYILYANKFNLTLPEDLFIIPTNLDILWRTKEYIDSFDISTETWNKLLSNYYMKMIEYAKLYVLSPILAEELDNFERTGELTSIVQEAILSLNLRIKILNFKHKDNDTYIHFCKILFGVYNGTNATIYYHRPLTGYMNMISDTIFVPVDNN.

Residues 172–347 (FSAWISHRPV…VFLPNPAFIH (176 aa)) enclose the Helicase ATP-binding domain. 185-192 (GGTGVGKT) contacts ATP. The DEXH box motif lies at 296–299 (DEVH). One can recognise a Helicase C-terminal domain in the interval 366–542 (NPSSRMAYIE…KFNLTLPEDL (177 aa)).

The protein belongs to the DEAD box helicase family. DEAH subfamily. As to quaternary structure, monomer.

The protein resides in the virion. The enzyme catalyses ATP + H2O = ADP + phosphate + H(+). In terms of biological role, NTP-dependent helicase that catalyzes unidirectional unwinding of 3'tailed duplex RNAs and plays an important role during transcription of early mRNAs, presumably by preventing R-loop formation behind the elongating RNA polymerase. Might also play a role in the export of newly synthesized mRNA chains out of the core into the cytoplasm. Required for replication and propagation of viral particles. In Homo sapiens (Human), this protein is RNA helicase NPH-II (OPG084).